The chain runs to 67 residues: Beta-defensin 103A (67 aa).

An N-terminal signal peptide occupies residues Met-1–Gly-22. 3 disulfide bridges follow: Cys-33-Cys-62, Cys-40-Cys-55, and Cys-45-Cys-63.

Belongs to the beta-defensin family.

It localises to the secreted. Functionally, exhibits antimicrobial activity against Gram-positive and Gram-negative bacteria. The polypeptide is Beta-defensin 103A (DEFB103A) (Pan troglodytes (Chimpanzee)).